Consider the following 48-residue polypeptide: Omega-agatoxin-Aa5a (48 aa).

Intrachain disulfides connect C3/C16, C10/C21, C15/C32, and C23/C30.

The protein belongs to the neurotoxin 02 (plectoxin) family. Expressed by the venom gland.

The protein resides in the secreted. Functionally, the toxin blocks voltage-gated calcium channels in rat cerebellar granule cells (IC(50)=200 nM). The protein is Omega-agatoxin-Aa5a of Agelenopsis aperta (North American funnel-web spider).